A 116-amino-acid polypeptide reads, in one-letter code: Guanylin (116 aa).

Positions 1-23 (MNACVLSVLCLLGALAVLVEGVT) are cleaved as a signal peptide. Positions 24-101 (VQDGDLSFPL…LQRLEAIAQD (78 aa)) are excised as a propeptide. Intrachain disulfides connect C69–C83, C105–C113, and C108–C116.

The protein belongs to the guanylin family. As to expression, localized in both crypts and villi in the small intestine and to superficial epithelial cells in the colon.

Its subcellular location is the secreted. Functionally, endogenous activator of intestinal guanylate cyclase. It stimulates this enzyme through the same receptor binding region as the heat-stable enterotoxins. The polypeptide is Guanylin (Guca2a) (Mus musculus (Mouse)).